The primary structure comprises 513 residues: ATP synthase subunit alpha (513 aa).

169–176 (GDRQTGKT) provides a ligand contact to ATP.

This sequence belongs to the ATPase alpha/beta chains family. F-type ATPases have 2 components, CF(1) - the catalytic core - and CF(0) - the membrane proton channel. CF(1) has five subunits: alpha(3), beta(3), gamma(1), delta(1), epsilon(1). CF(0) has three main subunits: a(1), b(2) and c(9-12). The alpha and beta chains form an alternating ring which encloses part of the gamma chain. CF(1) is attached to CF(0) by a central stalk formed by the gamma and epsilon chains, while a peripheral stalk is formed by the delta and b chains.

It localises to the cell inner membrane. It catalyses the reaction ATP + H2O + 4 H(+)(in) = ADP + phosphate + 5 H(+)(out). In terms of biological role, produces ATP from ADP in the presence of a proton gradient across the membrane. The alpha chain is a regulatory subunit. This chain is ATP synthase subunit alpha, found in Thiobacillus denitrificans (strain ATCC 25259 / T1).